The following is a 187-amino-acid chain: Protein GrpE (187 aa).

The interval 1–30 (MEKKETKSESEKTNKQDNKNTKSQKKENLN) is disordered.

It belongs to the GrpE family. As to quaternary structure, homodimer.

It is found in the cytoplasm. Functionally, participates actively in the response to hyperosmotic and heat shock by preventing the aggregation of stress-denatured proteins, in association with DnaK and GrpE. It is the nucleotide exchange factor for DnaK and may function as a thermosensor. Unfolded proteins bind initially to DnaJ; upon interaction with the DnaJ-bound protein, DnaK hydrolyzes its bound ATP, resulting in the formation of a stable complex. GrpE releases ADP from DnaK; ATP binding to DnaK triggers the release of the substrate protein, thus completing the reaction cycle. Several rounds of ATP-dependent interactions between DnaJ, DnaK and GrpE are required for fully efficient folding. The sequence is that of Protein GrpE from Borreliella burgdorferi (strain ATCC 35210 / DSM 4680 / CIP 102532 / B31) (Borrelia burgdorferi).